The following is a 378-amino-acid chain: MNIWLNMLITTGLGAIIGGYTNHLAIKMLFRPHRPIYIGKFQVPFTPGLIPKRRDELAVQLGKMVVDHLLTPEGIGKKLTNKEFQTSLIRWTQVEVDKVITNEQSLRDMLEKWNLEHVEEEAIGKIEHVITEKIHAFLAEYYTYTWEQALPHSVHEKVENAIPNVASFILKRGISFLESEEGKERLSKMIDDFFASRGTLLNLVGMFLGNVSLVDRVQPEVIKFLGQDGTERLLTDVLQKEWEKLKGRDVKELETFVEKEMIVNSILSAVKVEETVSRFLNQSVQQVCEPVRETIVGKVVPSAVEKGLKWGTENVGSILGNLQLAEIVQQEVSTFSTERLEDLVLSITKNELKMITYLGALLGGTIGFIQGLLLLFLK.

2 helical membrane passes run M1–T21 and Y357–L377.

This sequence belongs to the UPF0754 family.

The protein resides in the cell membrane. This chain is UPF0754 membrane protein BcerKBAB4_0766, found in Bacillus mycoides (strain KBAB4) (Bacillus weihenstephanensis).